A 338-amino-acid polypeptide reads, in one-letter code: UPF0104 membrane protein MTH_1261 (338 aa).

The next 8 helical transmembrane spans lie at A6–G26, D36–L56, L124–F144, W149–L169, I231–G251, I254–L274, L275–V295, and I310–V330.

Belongs to the UPF0104 family.

The protein resides in the cell membrane. The sequence is that of UPF0104 membrane protein MTH_1261 from Methanothermobacter thermautotrophicus (strain ATCC 29096 / DSM 1053 / JCM 10044 / NBRC 100330 / Delta H) (Methanobacterium thermoautotrophicum).